Consider the following 338-residue polypeptide: MEDIIFGKRSNVFDVNPENTVFVLIAGTSEVSTVPGITSAGATPELTRLTPAIDSEIIGEGKCLSSKDPPMTPEGIPTPAIVTKAILSLTNIRYIIVNGGFYAKPKTPFIETGLKPSNNPAVKTAIEDLDAAIHAGEHIGRLLDGVFENIILAESVPGGTTTAYAVLKAIGINAKTSSSMKEDPFSIKEKIAEMSFRRKLEKSPLGAVKEYGDNMMAVSLGISSSVKRSKIIFGGGTQMATVMYLDRLINGMRDRYISTTGWVYYHRTELFSDLGLSDYLAVSAMDFSGMKHPGLRYYQYGHVREGTGMGAAFLLARLMNFEAEAIYKSVDDFYEQFI.

The protein belongs to the UPF0284 family.

The polypeptide is UPF0284 protein TV0153 (Thermoplasma volcanium (strain ATCC 51530 / DSM 4299 / JCM 9571 / NBRC 15438 / GSS1)).